A 363-amino-acid polypeptide reads, in one-letter code: 3-dehydroquinate synthase (363 aa).

Residues threonine 134–threonine 135, lysine 147, and lysine 156 contribute to the NAD(+) site. Glutamate 189, histidine 254, and histidine 271 together coordinate Zn(2+).

It belongs to the sugar phosphate cyclases superfamily. Dehydroquinate synthase family. Co(2+) serves as cofactor. It depends on Zn(2+) as a cofactor. The cofactor is NAD(+).

The protein resides in the cytoplasm. The catalysed reaction is 7-phospho-2-dehydro-3-deoxy-D-arabino-heptonate = 3-dehydroquinate + phosphate. It participates in metabolic intermediate biosynthesis; chorismate biosynthesis; chorismate from D-erythrose 4-phosphate and phosphoenolpyruvate: step 2/7. Functionally, catalyzes the conversion of 3-deoxy-D-arabino-heptulosonate 7-phosphate (DAHP) to dehydroquinate (DHQ). This chain is 3-dehydroquinate synthase, found in Prochlorococcus marinus (strain MIT 9312).